We begin with the raw amino-acid sequence, 86 residues long: Large ribosomal subunit protein bL27 (86 aa).

The interval 1–21 (MAHKKGASSSRNGRDSAAQRL) is disordered.

It belongs to the bacterial ribosomal protein bL27 family.

This Mycobacterium tuberculosis (strain CDC 1551 / Oshkosh) protein is Large ribosomal subunit protein bL27 (rpmA).